The following is a 315-amino-acid chain: Cytochrome c biogenesis protein CcsA (315 aa).

7 helical membrane passes run 17–37 (LGFAAFLFLLMALPISFWAVA), 72–92 (ISNLYESLCFLTWGCTLAQLF), 101–121 (IVSAVATPVSLLSIGFASFVL), 146–166 (VIMCSYAALLIGSILSFGVFL), 221–241 (SITAGFLLLTVGLISGAVWAN), 255–272 (TWALICWLVYAAYLHTRI), and 282–302 (AILAIAGFFVIIVCYIGVNLL).

This sequence belongs to the CcmF/CycK/Ccl1/NrfE/CcsA family. May interact with ccs1.

It localises to the cellular thylakoid membrane. Required during biogenesis of c-type cytochromes (cytochrome c6 and cytochrome f) at the step of heme attachment. The protein is Cytochrome c biogenesis protein CcsA of Prochlorococcus marinus (strain NATL2A).